A 373-amino-acid polypeptide reads, in one-letter code: Glutamate 5-kinase (373 aa).

K15 serves as a coordination point for ATP. Substrate-binding residues include S55, D142, and N154. ATP is bound by residues 174-175 (TD) and 216-222 (TGGMATK). A PUA domain is found at 281–359 (AGRIIVDDGA…SRIEAILGYR (79 aa)).

The protein belongs to the glutamate 5-kinase family.

The protein localises to the cytoplasm. The catalysed reaction is L-glutamate + ATP = L-glutamyl 5-phosphate + ADP. It functions in the pathway amino-acid biosynthesis; L-proline biosynthesis; L-glutamate 5-semialdehyde from L-glutamate: step 1/2. In terms of biological role, catalyzes the transfer of a phosphate group to glutamate to form L-glutamate 5-phosphate. The polypeptide is Glutamate 5-kinase (Pelobacter propionicus (strain DSM 2379 / NBRC 103807 / OttBd1)).